A 68-amino-acid polypeptide reads, in one-letter code: Protein SlyX homolog (68 aa).

This sequence belongs to the SlyX family.

The polypeptide is Protein SlyX homolog (Brucella anthropi (strain ATCC 49188 / DSM 6882 / CCUG 24695 / JCM 21032 / LMG 3331 / NBRC 15819 / NCTC 12168 / Alc 37) (Ochrobactrum anthropi)).